Reading from the N-terminus, the 733-residue chain is DNA replication licensing factor Mcm5 (733 aa).

In terms of domain architecture, MCM spans 328–534 (IYERLSQSLA…RDITLAKHII (207 aa)). Arg368 is an ADP binding site. Residues 509-512 (SRFD) carry the Arginine finger motif.

Belongs to the MCM family. As to quaternary structure, component of the Mcm2-7 complex. The complex forms a toroidal hexameric ring with the proposed subunit order Mcm2-Mcm6-Mcm4-Mcm7-Mcm3-Mcm5.

Its subcellular location is the nucleus. The protein resides in the cytoplasm. It localises to the cytosol. It carries out the reaction ATP + H2O = ADP + phosphate + H(+). Acts as a component of the Mcm2-7 complex (Mcm complex) which is the putative replicative helicase essential for 'once per cell cycle' DNA replication initiation and elongation in eukaryotic cells. Core component of CDC45-MCM-GINS (CMG) helicase, the molecular machine that unwinds template DNA during replication, and around which the replisome is built. The active ATPase sites in the Mcm2-7 ring are formed through the interaction surfaces of two neighboring subunits such that a critical structure of a conserved arginine finger motif is provided in trans relative to the ATP-binding site of the Walker A box of the adjacent subunit. The six ATPase active sites, however, are likely to contribute differentially to the complex helicase activity. In Drosophila melanogaster (Fruit fly), this protein is DNA replication licensing factor Mcm5 (Mcm5).